The primary structure comprises 112 residues: UPF0342 protein SPH_1504 (112 aa).

Belongs to the UPF0342 family.

This Streptococcus pneumoniae (strain Hungary19A-6) protein is UPF0342 protein SPH_1504.